A 422-amino-acid chain; its full sequence is Probable FBD-associated F-box protein At1g32375 (422 aa).

The 53-residue stretch at 1–53 (MDKLSQLPEALLVRILSLLSAKDVVSTMVLSKRWQFLWMLVPKLIYDDSYQAI) folds into the F-box domain. Positions 342–392 (CWNEPSAVPECLLTSLETLEWVKYEGTEEEKEVAAFILRSGSCLKKVTISS) constitute an FBD domain.

This is Probable FBD-associated F-box protein At1g32375 from Arabidopsis thaliana (Mouse-ear cress).